The chain runs to 112 residues: MAEHKSDFSTDLKKGDTVIVVAGKDKGKQGQILQVLGKKSSVLVEKVNMIKRHTKPAQNREGGIVEKEAPIHISNVMIVDPATGKATRIKKKNLEDGRKVRVAAGSGEVLDK.

The protein belongs to the universal ribosomal protein uL24 family. Part of the 50S ribosomal subunit.

Functionally, one of two assembly initiator proteins, it binds directly to the 5'-end of the 23S rRNA, where it nucleates assembly of the 50S subunit. One of the proteins that surrounds the polypeptide exit tunnel on the outside of the subunit. The polypeptide is Large ribosomal subunit protein uL24 (Magnetococcus marinus (strain ATCC BAA-1437 / JCM 17883 / MC-1)).